Here is a 540-residue protein sequence, read N- to C-terminus: Keratin, type II cytoskeletal 73 (540 aa).

The interval Met-1–Gln-131 is head. Residues Glu-132–Leu-167 form a coil 1A region. Residues Glu-132 to Met-445 form the IF rod domain. Residues Gln-168–Tyr-186 form a linker 1 region. Residues Ile-187–Ile-278 are coil 1B. Positions Gln-279–Ile-302 are linker 12. The interval Ile-303–Glu-441 is coil 2. Residues Glu-442–Arg-540 form a tail region. The interval Ser-502 to Arg-540 is disordered. Residues Gly-526–Arg-540 are compositionally biased toward polar residues.

It belongs to the intermediate filament family. In terms of assembly, heterotetramer of two type I and two type II keratins. As to expression, highly expressed in hair follicles from scalp. In hair, it is specifically present in the inner root sheath (IRS) of the hair follicle. Present in the IRS cuticle, but not in Henle or Huxley layers of the IRS. In the IRS cuticle, it is expressed between the lowermost bulb region of the cuticle and the region where Henle cells undergo abrupt terminal differentiation. Detected up to the uppermost cortex region where cuticle cells terminally differentiate (at protein level).

In terms of biological role, has a role in hair formation. Specific component of keratin intermediate filaments in the inner root sheath (IRS) of the hair follicle. This Homo sapiens (Human) protein is Keratin, type II cytoskeletal 73 (KRT73).